The following is a 309-amino-acid chain: Jacalin-related lectin 25 (309 aa).

Residues 8–190 enclose the Jacalin-type lectin domain; that stretch reads MFKVGPIGSQ…LTSIGIYVCP (183 aa).

It belongs to the jacalin lectin family.

The protein is Jacalin-related lectin 25 (JAL25) of Arabidopsis thaliana (Mouse-ear cress).